The primary structure comprises 250 residues: Silencing boundary-establishment protein FUB1 (250 aa).

Residues 179–250 form a disordered region; it reads PDWSGGLPNP…GFGGSGSGFI (72 aa). The span at 202–213 shows a compositional bias: basic and acidic residues; it reads PNRRPAPRREDM. Residues 229–250 are compositionally biased toward gly residues; that stretch reads PGSGGFGGSGSGGFGGSGSGFI.

This sequence belongs to the proteasome inhibitor PI31 family. Interacts with the 20S proteasome.

Functionally, plays a role in the establishment of transcriptional silencing boundaries, preventing the propagation of heterochromatic silencing. The sequence is that of Silencing boundary-establishment protein FUB1 from Saccharomyces cerevisiae (strain ATCC 204508 / S288c) (Baker's yeast).